A 167-amino-acid polypeptide reads, in one-letter code: Cofilin-2 (167 aa).

Residues Gly-4–Leu-153 form the ADF-H domain. The Nuclear localization signal signature appears at Lys-30–Lys-34.

This sequence belongs to the actin-binding proteins ADF family.

It localises to the nucleus matrix. Its subcellular location is the cytoplasm. The protein localises to the cytoskeleton. In terms of biological role, controls reversibly actin polymerization and depolymerization in a pH-sensitive manner. It has the ability to bind G- and F-actin in a 1:1 ratio of cofilin to actin. It is the major component of intranuclear and cytoplasmic actin rods. This Xenopus tropicalis (Western clawed frog) protein is Cofilin-2 (cfl2).